The following is a 130-amino-acid chain: MYSQTTRDIEVTVKPFYLDDQSSPGDNHFVWAYRVRIVNKGSRTVQLLRRHWVITDAIGRVQEVKGPGVVGEQPVLRPGDAYEYTSGTPLPTPSGIMVGTYEMEDEDGSAFDIAIPAFSLDSPHEKPRLN.

The ApaG domain maps to 3 to 127 (SQTTRDIEVT…FSLDSPHEKP (125 aa)).

The polypeptide is Protein ApaG (Paramagnetospirillum magneticum (strain ATCC 700264 / AMB-1) (Magnetospirillum magneticum)).